Consider the following 341-residue polypeptide: L-threonine 3-dehydrogenase (341 aa).

Position 38 (Cys-38) interacts with Zn(2+). Residues Thr-40 and His-43 each act as charge relay system in the active site. 6 residues coordinate Zn(2+): His-63, Glu-64, Cys-93, Cys-96, Cys-99, and Cys-107. NAD(+)-binding positions include Ile-175, Asp-195, Arg-200, 262 to 264 (LGI), and 286 to 287 (IY).

It belongs to the zinc-containing alcohol dehydrogenase family. Homotetramer. Zn(2+) serves as cofactor.

It is found in the cytoplasm. It catalyses the reaction L-threonine + NAD(+) = (2S)-2-amino-3-oxobutanoate + NADH + H(+). The protein operates within amino-acid degradation; L-threonine degradation via oxydo-reductase pathway; glycine from L-threonine: step 1/2. Functionally, catalyzes the NAD(+)-dependent oxidation of L-threonine to 2-amino-3-ketobutyrate. This Shigella dysenteriae serotype 1 (strain Sd197) protein is L-threonine 3-dehydrogenase.